Consider the following 23-residue polypeptide: Septenin 2a (23 aa).

As to expression, expressed in skin glands.

It is found in the secreted. May act as an antimicrobial peptide. The chain is Septenin 2a from Osteopilus septentrionalis (Cuban treefrog).